The following is a 152-amino-acid chain: Clitocypin-2 (152 aa).

This sequence belongs to the protease inhibitor I48 family. Homodimer. In terms of tissue distribution, expressed in all analyzed tissues, but expression was higher in the pileus and in the lower part of the stipe.

In terms of biological role, binds and inhibits cysteine proteinases. Inhibits most strongly papain and cathepsin L, more weakly bromelain and cathepsin B while it is completely ineffective against cathepsin H. The chain is Clitocypin-2 (clt2) from Clitocybe nebularis (Clouded agaric).